A 121-amino-acid chain; its full sequence is Flagellar protein FliT (121 aa).

Positions methionine 1–leucine 50 are required for homodimerization. Residues methionine 60 to valine 98 are fliD binding.

This sequence belongs to the FliT family. Homodimer. Interacts with FliD and FlhC.

It is found in the cytoplasm. Its subcellular location is the cytosol. Functionally, dual-function protein that regulates the transcription of class 2 flagellar operons and that also acts as an export chaperone for the filament-capping protein FliD. As a transcriptional regulator, acts as an anti-FlhDC factor; it directly binds FlhC, thus inhibiting the binding of the FlhC/FlhD complex to class 2 promoters, resulting in decreased expression of class 2 flagellar operons. As a chaperone, effects FliD transition to the membrane by preventing its premature polymerization, and by directing it to the export apparatus. This Shigella sonnei (strain Ss046) protein is Flagellar protein FliT.